The chain runs to 396 residues: NADH-quinone oxidoreductase subunit D (396 aa).

This sequence belongs to the complex I 49 kDa subunit family. As to quaternary structure, NDH-1 is composed of 14 different subunits. Subunits NuoB, C, D, E, F, and G constitute the peripheral sector of the complex.

The protein resides in the cell inner membrane. It catalyses the reaction a quinone + NADH + 5 H(+)(in) = a quinol + NAD(+) + 4 H(+)(out). In terms of biological role, NDH-1 shuttles electrons from NADH, via FMN and iron-sulfur (Fe-S) centers, to quinones in the respiratory chain. The immediate electron acceptor for the enzyme in this species is believed to be ubiquinone. Couples the redox reaction to proton translocation (for every two electrons transferred, four hydrogen ions are translocated across the cytoplasmic membrane), and thus conserves the redox energy in a proton gradient. The polypeptide is NADH-quinone oxidoreductase subunit D (Methylobacterium sp. (strain 4-46)).